A 329-amino-acid polypeptide reads, in one-letter code: Glycerol-3-phosphate dehydrogenase [NAD(P)+] (329 aa).

Residues S10, W11, R31, and K105 each coordinate NADPH. Sn-glycerol 3-phosphate is bound by residues K105, G134, and S136. NADPH is bound at residue A138. Sn-glycerol 3-phosphate-binding residues include K189, D242, S252, R253, and N254. The Proton acceptor role is filled by K189. R253 provides a ligand contact to NADPH. V277 and E279 together coordinate NADPH.

Belongs to the NAD-dependent glycerol-3-phosphate dehydrogenase family.

It is found in the cytoplasm. The catalysed reaction is sn-glycerol 3-phosphate + NAD(+) = dihydroxyacetone phosphate + NADH + H(+). It catalyses the reaction sn-glycerol 3-phosphate + NADP(+) = dihydroxyacetone phosphate + NADPH + H(+). The protein operates within membrane lipid metabolism; glycerophospholipid metabolism. Functionally, catalyzes the reduction of the glycolytic intermediate dihydroxyacetone phosphate (DHAP) to sn-glycerol 3-phosphate (G3P), the key precursor for phospholipid synthesis. This chain is Glycerol-3-phosphate dehydrogenase [NAD(P)+], found in Neisseria gonorrhoeae (strain ATCC 700825 / FA 1090).